The chain runs to 535 residues: ATP-dependent RNA helicase DBP3 (535 aa).

Residues 1 to 21 (MGSSSKSEKRKYDDGEELLER) show a composition bias toward basic and acidic residues. The segment at 1–96 (MGSSSKSEKR…TSYGYVQSSK (96 aa)) is disordered. Residues 35–54 (KKDKKEKKDKKEKKDKKEKK) are compositionally biased toward basic residues. Positions 55–72 (DKKEKNKESKEAEARDDS) are enriched in basic and acidic residues. A compositionally biased stretch (low complexity) spans 79 to 88 (SSSSSTESTS). The Q motif motif lies at 128–154 (LSFDQIKLQKDVSSKLTKFPKPTPIQS). Residues 157-329 (WPFLLDGKDV…NNFMNQPVKV (173 aa)) enclose the Helicase ATP-binding domain. 170–177 (AETGSGKT) contributes to the ATP binding site. Positions 276-279 (DEAD) match the DEAD box motif. The region spanning 362–508 (NLLQKYQNTG…PVPEALLKYG (147 aa)) is the Helicase C-terminal domain.

It belongs to the DEAD box helicase family. DDX5/DBP2 subfamily.

It localises to the nucleus. The protein resides in the nucleolus. It carries out the reaction ATP + H2O = ADP + phosphate + H(+). Functionally, ATP-dependent RNA helicase required for 60S ribosomal subunit synthesis. Involved in efficient pre-rRNA processing, predominantly at site A3, which is necessary for the normal formation of 25S and 5.8S rRNAs. In Lodderomyces elongisporus (strain ATCC 11503 / CBS 2605 / JCM 1781 / NBRC 1676 / NRRL YB-4239) (Yeast), this protein is ATP-dependent RNA helicase DBP3 (DBP3).